A 122-amino-acid chain; its full sequence is Large ribosomal subunit protein uL14 (122 aa).

This sequence belongs to the universal ribosomal protein uL14 family. Part of the 50S ribosomal subunit. Forms a cluster with proteins L3 and L19. In the 70S ribosome, L14 and L19 interact and together make contacts with the 16S rRNA in bridges B5 and B8.

In terms of biological role, binds to 23S rRNA. Forms part of two intersubunit bridges in the 70S ribosome. The sequence is that of Large ribosomal subunit protein uL14 from Rickettsia rickettsii (strain Iowa).